Consider the following 133-residue polypeptide: Fluoride-specific ion channel FluC (133 aa).

The next 4 membrane-spanning stretches (helical) occupy residues valine 5 to leucine 25, valine 43 to isoleucine 63, valine 76 to leucine 96, and isoleucine 108 to leucine 128. The Na(+) site is built by glycine 83 and threonine 86.

The protein belongs to the fluoride channel Fluc/FEX (TC 1.A.43) family.

The protein resides in the cell inner membrane. It catalyses the reaction fluoride(in) = fluoride(out). Na(+) is not transported, but it plays an essential structural role and its presence is essential for fluoride channel function. Functionally, fluoride-specific ion channel. Important for reducing fluoride concentration in the cell, thus reducing its toxicity. The sequence is that of Fluoride-specific ion channel FluC from Saccharophagus degradans (strain 2-40 / ATCC 43961 / DSM 17024).